A 42-amino-acid chain; its full sequence is YKQCHKKGGHCFPKEVLICIPPSSDFGKMDCRWKRKCCKKRS.

3 cysteine pairs are disulfide-bonded: Cys4–Cys37, Cys11–Cys31, and Cys19–Cys38.

It belongs to the crotamine-myotoxin family. As to quaternary structure, monomer. In terms of tissue distribution, expressed by the venom gland.

It is found in the secreted. Cationic peptide that possesses multiple functions. It acts as a cell-penetrating peptide (CPP), and as a potent voltage-gated potassium channel (Kv) inhibitor. It exhibits antimicrobial activities, and hind limb paralysis. It also induces potent blockade of neuromuscular transmission in young chicken biventer cervicis preparation and potent myotoxic effect. In mice, it induces myonecrosis, upon intramuscular or subcutaneous injections. This Crotalus durissus cumanensis (South American rattlesnake) protein is Crotamine-IV-3.